The following is a 56-amino-acid chain: Small ribosomal subunit protein uS14 (56 aa).

Zn(2+)-binding residues include Cys21, Cys24, Cys39, and Cys42.

This sequence belongs to the universal ribosomal protein uS14 family. As to quaternary structure, component of the 40S small ribosomal subunit. The cofactor is Zn(2+).

The protein localises to the cytoplasm. It localises to the cytosol. It is found in the rough endoplasmic reticulum. This Lysiphlebus testaceipes (Greenbugs aphid parastoid) protein is Small ribosomal subunit protein uS14 (RpS29).